Reading from the N-terminus, the 1066-residue chain is DNA-directed RNA polymerase subunit beta (1066 aa).

The protein belongs to the RNA polymerase beta chain family. In terms of assembly, in plastids the minimal PEP RNA polymerase catalytic core is composed of four subunits: alpha, beta, beta', and beta''. When a (nuclear-encoded) sigma factor is associated with the core the holoenzyme is formed, which can initiate transcription.

It localises to the plastid. It is found in the chloroplast. It catalyses the reaction RNA(n) + a ribonucleoside 5'-triphosphate = RNA(n+1) + diphosphate. Its function is as follows. DNA-dependent RNA polymerase catalyzes the transcription of DNA into RNA using the four ribonucleoside triphosphates as substrates. The polypeptide is DNA-directed RNA polymerase subunit beta (Psilotum nudum (Whisk fern)).